A 412-amino-acid chain; its full sequence is Cysteate synthase (412 aa).

N6-(pyridoxal phosphate)lysine is present on lysine 105. Residues asparagine 131 and threonine 382 each coordinate pyridoxal 5'-phosphate.

It belongs to the threonine synthase family. Cysteate synthase subfamily. As to quaternary structure, homotrimer. Pyridoxal 5'-phosphate serves as cofactor.

It catalyses the reaction O-phospho-L-serine + sulfite + H(+) = L-cysteate + phosphate. Its pathway is cofactor biosynthesis; coenzyme M biosynthesis. Its function is as follows. Specifically catalyzes the beta-elimination of phosphate from L-phosphoserine and the beta-addition of sulfite to the dehydroalanine intermediate to produce L-cysteate. This chain is Cysteate synthase, found in Methanocorpusculum labreanum (strain ATCC 43576 / DSM 4855 / Z).